We begin with the raw amino-acid sequence, 175 residues long: Protein FLOWERING LOCUS T (175 aa).

Belongs to the phosphatidylethanolamine-binding protein family. Interacts with FD/BZIP14 and FDP/BZIP27. Interacts with FTIP1/MCTP1 in phloem companion cells. Interacts with NAKR1. Mostly localized in leaves vasculature.

The protein resides in the cytoplasm. It is found in the nucleus. Its subcellular location is the endoplasmic reticulum. In terms of biological role, component of the mobile flower-promoting signal (floral stimulus or florigen). Promotes the transition from vegetative growth to flowering. Required for 'SEPALLATA3' (SEP3) and 'FRUITFULL' (FUL) accumulation in mature rosette leaves. Seems to acts in parallel with 'LEAFY' to induce flowering by regulating 'APETALA1'. Translated in leaves and then transported to the shoot apical meristem where it activates the transcription of several floral meristem identity genes. May play a role in both the autonomous and the long-day flowering pathways. This chain is Protein FLOWERING LOCUS T, found in Arabidopsis thaliana (Mouse-ear cress).